The chain runs to 241 residues: Small ribosomal subunit protein uS2 (241 aa).

Belongs to the universal ribosomal protein uS2 family.

The sequence is that of Small ribosomal subunit protein uS2 from Shigella flexneri serotype 5b (strain 8401).